Reading from the N-terminus, the 647-residue chain is Chaperone protein DnaK (647 aa).

T198 carries the phosphothreonine; by autocatalysis modification. Composition is skewed to basic and acidic residues over residues 514-529 (AEANKEEDKKKRESVD), 540-557 (STEKNLKEHGAKVSDADK), and 600-622 (SQEKKEGSPKEGDKNDEGKKDDN). Disordered regions lie at residues 514-557 (AEAN…DADK) and 596-647 (AIYK…EKSA). Residues 623–632 (VVDADFEEVK) are compositionally biased toward acidic residues. A compositionally biased stretch (basic and acidic residues) spans 633–647 (EESKEGKEEDKEKSA).

Belongs to the heat shock protein 70 family.

Acts as a chaperone. The chain is Chaperone protein DnaK from Pelagibacter ubique (strain HTCC1062).